Reading from the N-terminus, the 317-residue chain is MNRFGTRLVGATATTPPAPKARSNENLDKIDMSLDEIIKLNRKEGKKQSFPRLNRRLQQSGARQLRMRVRWGVQQSSGFGKTSVSRRGRVLPGKRRPYGVITGLAARKATGIRKGISPMNRPPLSDKNIERYFPALKRKTSLLRQNEVQRKPVAVLKRPNQLNRKNNIPANFTRSGNKLSHQKDTRQATFLFRRGLKVQTQLNTEQLIDDVVAKRTRQWRTSTTNGGILTVSIDNPGAVQCPVTQKPRLTRTAVPSFLTKREQSDVKKIPKGVPLQFDINSVGKQTGMTLNERFGILKEQRAALPFSKGGSRFVTVG.

M1 bears the N-acetylmethionine mark. The disordered stretch occupies residues 1-23; sequence MNRFGTRLVGATATTPPAPKARS. At T14 the chain carries Phosphothreonine. Phosphoserine is present on S23. The short motif at 26 to 44 is the UAP56-binding motif element; the sequence is NLDKIDMSLDEIIKLNRKE. Phosphoserine occurs at positions 60 and 117. K139 participates in a covalent cross-link: Glycyl lysine isopeptide (Lys-Gly) (interchain with G-Cter in SUMO1). Residue K260 forms a Glycyl lysine isopeptide (Lys-Gly) (interchain with G-Cter in SUMO2) linkage.

Belongs to the UIF family. Interacts with DDX39B/UAP56 and NXF1; interaction with DDX39B/UAP56 and NXF1 are mutually exclusive. Interacts with SSRP1; required for its recruitment to mRNAs. Interacts with CHTOP.

Its subcellular location is the nucleus. The protein localises to the nucleoplasm. It is found in the nucleus speckle. In terms of biological role, required for mRNA export from the nucleus to the cytoplasm. Acts as an adapter that uses the DDX39B/UAP56-NFX1 pathway to ensure efficient mRNA export and delivering to the nuclear pore. Associates with spliced and unspliced mRNAs simultaneously with ALYREF/THOC4. In Rattus norvegicus (Rat), this protein is UAP56-interacting factor (Fyttd1).